A 207-amino-acid chain; its full sequence is Large ribosomal subunit protein bL20 (207 aa).

The tract at residues 117–161 is disordered; sequence QETQPQPEEKTSLQPEKVLSTELSEEKSDDTLETKPQTTQVKAKK. A compositionally biased stretch (basic and acidic residues) spans 140-149; it reads SEEKSDDTLE.

It belongs to the bacterial ribosomal protein bL20 family.

Functionally, binds directly to 23S ribosomal RNA and is necessary for the in vitro assembly process of the 50S ribosomal subunit. It is not involved in the protein synthesizing functions of that subunit. This is Large ribosomal subunit protein bL20 from Onion yellows phytoplasma (strain OY-M).